The primary structure comprises 962 residues: MACRRRYLSSLETGSSLSTDRYSVEGEAPSSETGTSLDSPSAYHQGPLVPGSSLSPDHYEHTSVGAYGLYAGPGPQQRTRRPRLQHSTSVLRKQAEEEAIKRSRSLSESYELSSDLQDKQVEMLERKYGGRLVTRHAARTIQTAFRQYQMNKNFERLRSSMSENRMSRRIVLSNMRMQFSFEGPEKVHSSYFEGKQVSVTNDGSQLGALVPSECGDLSDPALKSPAPSSDFADAITELEDAFSRQVKSLAESIDDALNCRSLHSEEVPASDTARARDTEPKPGLHGMDHRKLDEMTASYSDVTLYIDEEELSPPLPLSQAGDRPSSTESDLRLRSGGAAQDYWALAHKEDKADTDTSCRSTPSLERPEPRLRVEHLPLLTIEPPSDSSVELSDRSDRSSLKRQSAYERSLGGQQGSPKHGPHGGPPKGLPREEPELRPRPPRPLESHLAINGSANRQSKSESDYSDGDNDSINSTSNSNDTINCSSESSSRDSLREQTLSKQTYHKETRNSWDSPAFSNDVIRKRHYRIGLNLFNKKPEKGIQYLIERGFVPDTPVGVAHFLLQRKGLSRQMIGEFLGNRQKQFNRDVLDCVVDEMDFSAMELDEALRKFQAHIRVQGEAQKVERLIEAFSQRYCVCNPGVVRQFRNPDTIFILAFAIILLNTDMYSPNVKPERKMKLEDFVKNLRGVDDGEDIPRETLIGIYERIRKRELKTNEDHVSQVQKVEKLIVGKKPIGSLHHGLGCVLSLPHRRLVCYCRLFEVPDPNKPQKLGLHQREIFLFNDLLVVTKIFQKKKNSVTYSFRQSFSLYGMQVLLFENQYYPNGIRLTSAVPGADIKVLINFNAPNPQDRKKFTDDLRESVAEVQEMEKHRIESELEKQKGVVRPSMSQCSSLKKESGNGTLSRACLDDSYASGEGLKRSALSSSLRDLSEAGKRGRRSSAGSLESNVEFQPFQPSQPPVLCS.

The interval Met-1 to Glu-96 is disordered. Positions Leu-8 to Thr-19 are enriched in low complexity. The span at Ser-30–Ser-39 shows a compositional bias: polar residues. Phosphoserine is present on residues Ser-89, Ser-105, and Ser-107. An IQ domain is found at Thr-134–Glu-163. Ser-180, Ser-248, and Ser-252 each carry phosphoserine. 3 disordered regions span residues Ser-264–Leu-292, Leu-311–Leu-333, and Lys-348–Ala-516. A compositionally biased stretch (basic and acidic residues) spans Ala-273–Leu-292. 2 stretches are compositionally biased toward basic and acidic residues: residues Glu-365–His-375 and Leu-429–Glu-445. The span at Asp-470–Ser-488 shows a compositional bias: low complexity. Phosphoserine is present on residues Ser-511 and Ser-514. The SEC7 domain maps to Ala-516–Arg-709. One can recognise a PH domain in the interval His-773–Glu-865. The residue at position 891 (Ser-891) is a Phosphoserine. Tyr-910 carries the post-translational modification Phosphotyrosine. Positions Leu-921–Ser-962 are disordered. Residues Ser-923 and Ser-924 each carry the phosphoserine modification. Residues Ser-939–Glu-948 show a composition bias toward polar residues.

This sequence belongs to the BRAG family. In terms of assembly, interacts with ARF1 and ARF6. Interacts with GRIA2; the interaction is required for ARF6 activation.

It is found in the cytoplasm. Its subcellular location is the nucleus. The protein localises to the postsynaptic density. The protein resides in the cytoplasmic vesicle. It localises to the secretory vesicle. It is found in the synaptic vesicle. In terms of biological role, guanine nucleotide exchange factor for ARF1 and ARF6. Guanine nucleotide exchange factor activity is enhanced by lipid binding. Accelerates GTP binding by ARFs of all three classes. Guanine nucleotide exchange protein for ARF6, mediating internalization of beta-1 integrin. Involved in neuronal development. In neurons, plays a role in the control of vesicle formation by endocytoc cargo. Upon long term depression, interacts with GRIA2 and mediates the activation of ARF6 to internalize synaptic AMPAR receptors. This Rattus norvegicus (Rat) protein is IQ motif and SEC7 domain-containing protein 1.